The sequence spans 211 residues: Ribosomal RNA large subunit methyltransferase E (211 aa).

5 residues coordinate S-adenosyl-L-methionine: Gly60, Trp62, Asp85, Asp101, and Asp126. The active-site Proton acceptor is Lys166.

This sequence belongs to the class I-like SAM-binding methyltransferase superfamily. RNA methyltransferase RlmE family.

The protein resides in the cytoplasm. It carries out the reaction uridine(2552) in 23S rRNA + S-adenosyl-L-methionine = 2'-O-methyluridine(2552) in 23S rRNA + S-adenosyl-L-homocysteine + H(+). Functionally, specifically methylates the uridine in position 2552 of 23S rRNA at the 2'-O position of the ribose in the fully assembled 50S ribosomal subunit. This chain is Ribosomal RNA large subunit methyltransferase E, found in Bordetella petrii (strain ATCC BAA-461 / DSM 12804 / CCUG 43448).